The primary structure comprises 199 residues: MAEFDKEAYAERERSAASRKTLLKKQELVNSYKERLQKSNGFVIFFNFQGIDAYPLTLLRLDIKDLKGEIVVGKNTLFYRAFSDTVLSDHRDIFVGPTAALFAYEDPVAVTKKLVEFLKETFDKEWEGRIKGGLLDYKYITPEQVKELAELPSKEELIAKLLGVLMAPVTQLAMTLKAVPQKLVLVLKAIEEEKSKGGQ.

Belongs to the universal ribosomal protein uL10 family. As to quaternary structure, part of the ribosomal stalk of the 50S ribosomal subunit. The N-terminus interacts with L11 and the large rRNA to form the base of the stalk. The C-terminus forms an elongated spine to which L12 dimers bind in a sequential fashion forming a multimeric L10(L12)X complex.

Forms part of the ribosomal stalk, playing a central role in the interaction of the ribosome with GTP-bound translation factors. This chain is Large ribosomal subunit protein uL10 (rplJ), found in Aquifex aeolicus (strain VF5).